Reading from the N-terminus, the 1342-residue chain is DNA-directed RNA polymerase subunit beta (1342 aa).

The protein belongs to the RNA polymerase beta chain family. As to quaternary structure, the RNAP catalytic core consists of 2 alpha, 1 beta, 1 beta' and 1 omega subunit. When a sigma factor is associated with the core the holoenzyme is formed, which can initiate transcription.

The enzyme catalyses RNA(n) + a ribonucleoside 5'-triphosphate = RNA(n+1) + diphosphate. In terms of biological role, DNA-dependent RNA polymerase catalyzes the transcription of DNA into RNA using the four ribonucleoside triphosphates as substrates. The chain is DNA-directed RNA polymerase subunit beta from Vibrio parahaemolyticus serotype O3:K6 (strain RIMD 2210633).